The primary structure comprises 166 residues: tRNA-acetylating toxin (166 aa).

The interval 1-22 is disordered; that stretch reads MSGYSAPRRISDADDVTSFSSG. In terms of domain architecture, N-acetyltransferase spans 1 to 162; sequence MSGYSAPRRI…LMLLMKDARA (162 aa). Tyr138 is a catalytic residue.

It belongs to the acetyltransferase family. GNAT subfamily. Homodimer, forms a complex with cognate antitoxin TacA.

The enzyme catalyses glycyl-tRNA(Gly) + acetyl-CoA = N-acetylglycyl-tRNA(Gly) + CoA + H(+). In terms of biological role, toxic component of a type II toxin-antitoxin (TA) system. Overexpression of this gene alone in M.smegmatis inhibits growth, while overexpression of the tacA-tacT operon does not. Acetylates glycyl-tRNA(Gly) but not other tRNAs, blocks in vitro translation in the presence, but not absence, of acetyl-coenzyme A. Peptidyl-tRNA hydrolase (pth) counteracts the product of this enzyme in vitro. Neutralized by cognate antitoxin TacA. Does not seem to be active in laboratory growth conditions. TacA-TacT both represses and derepresses expression of its own operon. In Mycobacterium tuberculosis (strain ATCC 25618 / H37Rv), this protein is tRNA-acetylating toxin.